Reading from the N-terminus, the 452-residue chain is Phosphoglucosamine mutase (452 aa).

The Phosphoserine intermediate role is filled by S108. Mg(2+)-binding residues include S108, D247, D249, and D251. Position 108 is a phosphoserine (S108).

It belongs to the phosphohexose mutase family. Mg(2+) is required as a cofactor. Post-translationally, activated by phosphorylation.

The catalysed reaction is alpha-D-glucosamine 1-phosphate = D-glucosamine 6-phosphate. Functionally, catalyzes the conversion of glucosamine-6-phosphate to glucosamine-1-phosphate. The protein is Phosphoglucosamine mutase of Burkholderia pseudomallei (strain K96243).